The primary structure comprises 385 residues: Protein kup-1 (385 aa).

2 disordered regions span residues M1–D20 and S326–Y385. Composition is skewed to basic and acidic residues over residues G8–D20, R339–V351, and G364–Y385.

In Caenorhabditis elegans, this protein is Protein kup-1 (kup-1).